We begin with the raw amino-acid sequence, 316 residues long: uncharacterized protein (316 aa).

This sequence to yeast YGR277c.

This is an uncharacterized protein from Schizosaccharomyces pombe (strain 972 / ATCC 24843) (Fission yeast).